The primary structure comprises 226 residues: Chalcone--flavanone isomerase (226 aa).

Threonine 51, asparagine 116, and serine 194 together coordinate substrate.

This sequence belongs to the chalcone isomerase family.

It carries out the reaction a chalcone = a flavanone.. The protein operates within secondary metabolite biosynthesis; flavonoid biosynthesis. In terms of biological role, catalyzes the intramolecular cyclization of bicyclic chalcones into tricyclic (S)-flavanones. Responsible for the isomerization of 4,2',4',6'-tetrahydroxychalcone (also termed chalcone) into naringenin. In Canna generalis (Canna lily), this protein is Chalcone--flavanone isomerase (CHI).